Here is a 243-residue protein sequence, read N- to C-terminus: Adenosylcobinamide-GDP ribazoletransferase (243 aa).

7 consecutive transmembrane segments (helical) span residues 8–28 (WLGA…PIQL), 36–56 (PWVG…LDFL), 58–78 (VPSP…TGGL), 107–127 (AGAF…TSLS), 131–151 (KGSV…WAIA), 187–207 (FLLP…LLIP), and 222–242 (YGAV…VGSA).

The protein belongs to the CobS family. Mg(2+) is required as a cofactor.

It is found in the cell inner membrane. The catalysed reaction is alpha-ribazole + adenosylcob(III)inamide-GDP = adenosylcob(III)alamin + GMP + H(+). It catalyses the reaction alpha-ribazole 5'-phosphate + adenosylcob(III)inamide-GDP = adenosylcob(III)alamin 5'-phosphate + GMP + H(+). The protein operates within cofactor biosynthesis; adenosylcobalamin biosynthesis; adenosylcobalamin from cob(II)yrinate a,c-diamide: step 7/7. In terms of biological role, joins adenosylcobinamide-GDP and alpha-ribazole to generate adenosylcobalamin (Ado-cobalamin). Also synthesizes adenosylcobalamin 5'-phosphate from adenosylcobinamide-GDP and alpha-ribazole 5'-phosphate. The sequence is that of Adenosylcobinamide-GDP ribazoletransferase from Thermosynechococcus vestitus (strain NIES-2133 / IAM M-273 / BP-1).